The sequence spans 118 residues: Large ribosomal subunit protein uL24 (118 aa).

Belongs to the universal ribosomal protein uL24 family. As to quaternary structure, part of the 50S ribosomal subunit.

Functionally, one of two assembly initiator proteins, it binds directly to the 5'-end of the 23S rRNA, where it nucleates assembly of the 50S subunit. In terms of biological role, one of the proteins that surrounds the polypeptide exit tunnel on the outside of the subunit. In Prochlorococcus marinus (strain MIT 9313), this protein is Large ribosomal subunit protein uL24.